The primary structure comprises 318 residues: ATP phosphoribosyltransferase regulatory subunit (318 aa).

The protein belongs to the class-II aminoacyl-tRNA synthetase family. HisZ subfamily. Heteromultimer composed of HisG and HisZ subunits.

It is found in the cytoplasm. It participates in amino-acid biosynthesis; L-histidine biosynthesis; L-histidine from 5-phospho-alpha-D-ribose 1-diphosphate: step 1/9. Functionally, required for the first step of histidine biosynthesis. May allow the feedback regulation of ATP phosphoribosyltransferase activity by histidine. This chain is ATP phosphoribosyltransferase regulatory subunit, found in Lactococcus lactis subsp. cremoris (strain SK11).